Reading from the N-terminus, the 375-residue chain is tRNA (guanine(26)-N(2))-dimethyltransferase (375 aa).

Positions 2–368 (KYITEGNTKL…AKLIDIVEFI (367 aa)) constitute a Trm1 methyltransferase domain. Residues arginine 35, arginine 66, aspartate 89, aspartate 116, and alanine 117 each coordinate S-adenosyl-L-methionine.

It belongs to the class I-like SAM-binding methyltransferase superfamily. Trm1 family.

It carries out the reaction guanosine(26) in tRNA + 2 S-adenosyl-L-methionine = N(2)-dimethylguanosine(26) in tRNA + 2 S-adenosyl-L-homocysteine + 2 H(+). Dimethylates a single guanine residue at position 26 of a number of tRNAs using S-adenosyl-L-methionine as donor of the methyl groups. In Methanococcus aeolicus (strain ATCC BAA-1280 / DSM 17508 / OCM 812 / Nankai-3), this protein is tRNA (guanine(26)-N(2))-dimethyltransferase.